Here is a 341-residue protein sequence, read N- to C-terminus: Malate dehydrogenase 1, mitochondrial (341 aa).

A mitochondrion-targeting transit peptide spans 1–22 (MFRSMLVRSSASAKQAVIRRSF). NAD(+)-binding positions include 36–42 (GAAGGIG) and D62. Positions 109 and 115 each coordinate substrate. NAD(+) contacts are provided by residues N122 and 145 to 147 (ISN). Substrate-binding residues include N147 and R181. Residue H205 is the Proton acceptor of the active site. Residue M256 coordinates NAD(+).

This sequence belongs to the LDH/MDH superfamily. MDH type 1 family. Homodimer. Post-translationally, forms intramolecular disulfide bonds. In terms of tissue distribution, expressed in rosette leaves.

Its subcellular location is the mitochondrion matrix. The catalysed reaction is (S)-malate + NAD(+) = oxaloacetate + NADH + H(+). Negatively regulated by ATP. Not redox-regulated. The formation of intramolecular disulfide bonds does not alter enzymatic activity. Catalyzes a reversible NAD-dependent dehydrogenase reaction involved in central metabolism and redox homeostasis between organelle compartments. Required for carbon dioxide and energy partitioning in leaves. May limit photorespiration during the dark phase. Its activity is essential to shuttle reductants out from the mitochondria to support the photorespiratory flux. Can convert 2-oxoglutarate to (S)-2-hydroxyglutarate in vitro. In Arabidopsis thaliana (Mouse-ear cress), this protein is Malate dehydrogenase 1, mitochondrial.